The primary structure comprises 182 residues: Peptidyl-prolyl cis-trans isomerase ssp-1 (182 aa).

One can recognise a WW domain in the interval 7–41 (TGLPEDWEVRHSQSKNLPYYFNSATKTSRWEPPSG). One can recognise a PpiC domain in the interval 71–182 (QGKIRCAHLL…SGLHLIERLE (112 aa)).

It carries out the reaction [protein]-peptidylproline (omega=180) = [protein]-peptidylproline (omega=0). In terms of biological role, site-specific PPIase with respect to the amino acid N-terminal to the proline residue. Peptides with glutamate, phosphoserine, or phosphothreonine in the -1 position are the best substrates. It is not only able to isomerize small peptides but is also active in protein folding. In Neurospora crassa (strain ATCC 24698 / 74-OR23-1A / CBS 708.71 / DSM 1257 / FGSC 987), this protein is Peptidyl-prolyl cis-trans isomerase ssp-1 (ssp-1).